The primary structure comprises 461 residues: Mannose-6-phosphate isomerase (461 aa).

Zn(2+) is bound by residues Q107, H109, E134, and H291. R310 is a catalytic residue.

Belongs to the mannose-6-phosphate isomerase type 1 family. Zn(2+) serves as cofactor.

It localises to the cytoplasm. It catalyses the reaction D-mannose 6-phosphate = D-fructose 6-phosphate. The protein operates within nucleotide-sugar biosynthesis; GDP-alpha-D-mannose biosynthesis; alpha-D-mannose 1-phosphate from D-fructose 6-phosphate: step 1/2. In terms of biological role, involved in the synthesis of the GDP-mannose and dolichol-phosphate-mannose required for a number of critical mannosyl transfer reactions. The chain is Mannose-6-phosphate isomerase (manA) from Emericella nidulans (strain FGSC A4 / ATCC 38163 / CBS 112.46 / NRRL 194 / M139) (Aspergillus nidulans).